A 126-amino-acid polypeptide reads, in one-letter code: Histone H2B type 1-L (126 aa).

Low complexity predominate over residues 1 to 12; it reads MPELAKSAPAPK. The segment at 1–36 is disordered; that stretch reads MPELAKSAPAPKKGSKKAVTKAQKKDGKKRKRSRKE. Pro2 bears the N-acetylproline mark. Position 3 is an ADP-ribosyl glutamic acid (Glu3). An N6-(2-hydroxyisobutyryl)lysine; alternate modification is found at Lys6. N6-(beta-hydroxybutyryl)lysine; alternate is present on Lys6. Position 6 is an N6-acetyllysine; alternate (Lys6). At Lys6 the chain carries N6-butyryllysine; alternate. Lys6 is modified (N6-crotonyllysine; alternate). Lys6 is subject to N6-lactoyllysine; alternate. Residue Lys6 forms a Glycyl lysine isopeptide (Lys-Gly) (interchain with G-Cter in SUMO2); alternate linkage. Position 7 is an ADP-ribosylserine (Ser7). The residue at position 12 (Lys12) is an N6-(beta-hydroxybutyryl)lysine; alternate. Lys12 and Lys13 each carry N6-acetyllysine; alternate. 2 positions are modified to N6-crotonyllysine; alternate: Lys12 and Lys13. Lys12 is modified (N6-lactoyllysine; alternate). At Lys13 the chain carries N6-(2-hydroxyisobutyryl)lysine; alternate. Ser15 bears the Phosphoserine; by STK4/MST1 mark. 4 positions are modified to N6-acetyllysine; alternate: Lys16, Lys17, Lys21, and Lys24. N6-crotonyllysine; alternate is present on residues Lys16, Lys17, Lys21, and Lys24. 4 positions are modified to N6-lactoyllysine; alternate: Lys16, Lys17, Lys21, and Lys24. Residues Lys17 and Lys21 each carry the N6-(beta-hydroxybutyryl)lysine; alternate modification. Position 17 is an N6-glutaryllysine; alternate (Lys17). Residues Lys21 and Lys24 each carry the N6-(2-hydroxyisobutyryl)lysine; alternate modification. Lys21 is subject to N6-butyryllysine; alternate. Lys21 is covalently cross-linked (Glycyl lysine isopeptide (Lys-Gly) (interchain with G-Cter in SUMO2); alternate). The residue at position 25 (Lys25) is an N6-(2-hydroxyisobutyryl)lysine. The residue at position 35 (Lys35) is an N6-(2-hydroxyisobutyryl)lysine; alternate. Lys35 is subject to N6-(beta-hydroxybutyryl)lysine; alternate. At Lys35 the chain carries N6-crotonyllysine; alternate. Lys35 is subject to N6-glutaryllysine; alternate. An N6-succinyllysine; alternate modification is found at Lys35. A Glycyl lysine isopeptide (Lys-Gly) (interchain with G-Cter in ubiquitin); alternate cross-link involves residue Lys35. A PolyADP-ribosyl glutamic acid modification is found at Glu36. Phosphoserine; by AMPK is present on Ser37. N6-(2-hydroxyisobutyryl)lysine; alternate occurs at positions 44, 47, and 58. Lys44 carries the post-translational modification N6-lactoyllysine; alternate. N6-glutaryllysine; alternate occurs at positions 44 and 47. Lys47 is modified (N6-methyllysine; alternate). Lys58 carries the post-translational modification N6,N6-dimethyllysine; alternate. A Dimethylated arginine modification is found at Arg80. Lys86 carries the N6-(2-hydroxyisobutyryl)lysine; alternate modification. Lys86 carries the post-translational modification N6-(beta-hydroxybutyryl)lysine; alternate. Position 86 is an N6-acetyllysine; alternate (Lys86). N6-lactoyllysine; alternate is present on Lys86. Residue Lys86 is modified to N6,N6,N6-trimethyllysine; alternate. Residues Arg87 and Arg93 each carry the omega-N-methylarginine modification. Lys109 is subject to N6-(2-hydroxyisobutyryl)lysine; alternate. Position 109 is an N6-lactoyllysine; alternate (Lys109). Residue Lys109 is modified to N6-glutaryllysine; alternate. An N6-methyllysine; alternate modification is found at Lys109. An O-linked (GlcNAc) serine glycan is attached at Ser113. Thr116 bears the Phosphothreonine mark. An N6-(2-hydroxyisobutyryl)lysine; alternate mark is found at Lys117 and Lys121. An N6-(beta-hydroxybutyryl)lysine; alternate mark is found at Lys117 and Lys121. Lys117 and Lys121 each carry N6-lactoyllysine; alternate. An N6-glutaryllysine; alternate mark is found at Lys117 and Lys121. N6-succinyllysine; alternate is present on residues Lys117 and Lys121. Lys117 is modified (N6-malonyllysine; alternate). The residue at position 117 (Lys117) is an N6-methylated lysine; alternate. Lys121 participates in a covalent cross-link: Glycyl lysine isopeptide (Lys-Gly) (interchain with G-Cter in ubiquitin); alternate.

The protein belongs to the histone H2B family. The nucleosome is a histone octamer containing two molecules each of H2A, H2B, H3 and H4 assembled in one H3-H4 heterotetramer and two H2A-H2B heterodimers. The octamer wraps approximately 147 bp of DNA. In terms of processing, monoubiquitination at Lys-35 (H2BK34Ub) by the MSL1/MSL2 dimer is required for histone H3 'Lys-4' (H3K4me) and 'Lys-79' (H3K79me) methylation and transcription activation at specific gene loci, such as HOXA9 and MEIS1 loci. Similarly, monoubiquitination at Lys-121 (H2BK120Ub) by the RNF20/40 complex gives a specific tag for epigenetic transcriptional activation and is also prerequisite for histone H3 'Lys-4' and 'Lys-79' methylation. It also functions cooperatively with the FACT dimer to stimulate elongation by RNA polymerase II. H2BK120Ub also acts as a regulator of mRNA splicing: deubiquitination by USP49 is required for efficient cotranscriptional splicing of a large set of exons. Post-translationally, phosphorylation at Ser-37 (H2BS36ph) by AMPK in response to stress promotes transcription. Phosphorylated on Ser-15 (H2BS14ph) by STK4/MST1 during apoptosis; which facilitates apoptotic chromatin condensation. Also phosphorylated on Ser-15 in response to DNA double strand breaks (DSBs), and in correlation with somatic hypermutation and immunoglobulin class-switch recombination. GlcNAcylation at Ser-113 promotes monoubiquitination of Lys-121. It fluctuates in response to extracellular glucose, and associates with transcribed genes. In terms of processing, ADP-ribosylated by PARP1 or PARP2 on Ser-7 (H2BS6ADPr) in response to DNA damage. H2BS6ADPr promotes recruitment of CHD1L. Mono-ADP-ribosylated on Glu-3 (H2BE2ADPr) by PARP3 in response to single-strand breaks. Poly ADP-ribosylation on Glu-36 (H2BE35ADPr) by PARP1 regulates adipogenesis: it inhibits phosphorylation at Ser-37 (H2BS36ph), thereby blocking expression of pro-adipogenetic genes. Post-translationally, crotonylation (Kcr) is specifically present in male germ cells and marks testis-specific genes in post-meiotic cells, including X-linked genes that escape sex chromosome inactivation in haploid cells. Crotonylation marks active promoters and enhancers and confers resistance to transcriptional repressors. It is also associated with post-meiotically activated genes on autosomes. Lactylated in macrophages by EP300/P300 by using lactoyl-CoA directly derived from endogenous or exogenous lactate, leading to stimulates gene transcription.

The protein localises to the nucleus. Its subcellular location is the chromosome. Functionally, core component of nucleosome. Nucleosomes wrap and compact DNA into chromatin, limiting DNA accessibility to the cellular machineries which require DNA as a template. Histones thereby play a central role in transcription regulation, DNA repair, DNA replication and chromosomal stability. DNA accessibility is regulated via a complex set of post-translational modifications of histones, also called histone code, and nucleosome remodeling. The sequence is that of Histone H2B type 1-L from Homo sapiens (Human).